A 465-amino-acid polypeptide reads, in one-letter code: MIEYMEYVLRQFERTTSWDRDYSYENITATSDNLLQFEIPDSLNLQISNQSTPNTFNTFELSNRSIINGSLSYLYTDCGQLDKIVQNSLKVPLQQRVDTYQCLRPGRTLGTSFRSQMLLYGRMYWPGSILEAMYCKRLTPQSQLVLKSLLSAAGESSILTLYWQRNAPWGSQDIVFSTNELLLGYRFLHNLSPGRSHEGSPHGQSTLSLGAEFWLGISNLLPGCSTALRYCTHATNTGKPITLTLSLNPLFGHISSSYSVKFSPGTTFCSKYDFNVYSIESNLSFGCEFWKSSAAAHKQATNEEETSIEVATETPVSDPRYCGAVPGARSFDQIRPFAELPSDNQLYHQLMMPNSSNALIDNVNLPFPSPLLRYPPEKSVTDKFAAMIDATQFTSVLKMSSSLRDKNLRLLWEGKYKGFLVSAGAELTTIPLEAPKTINEITAQQVPRPLWLRPAKFGIQIQYST.

Belongs to the MDM10 family. As to quaternary structure, component of the ER-mitochondria encounter structure (ERMES) or MDM complex, composed of MMM1, MDM10, MDM12 and MDM34. Associates with the mitochondrial outer membrane sorting assembly machinery SAM(core) complex.

The protein localises to the mitochondrion outer membrane. Its function is as follows. Component of the ERMES/MDM complex, which serves as a molecular tether to connect the endoplasmic reticulum and mitochondria. Components of this complex are involved in the control of mitochondrial shape and protein biogenesis and may function in phospholipid exchange. MDM10 is involved in the late assembly steps of the general translocase of the mitochondrial outer membrane (TOM complex). Functions in the TOM40-specific route of the assembly of outer membrane beta-barrel proteins, including the association of TOM40 with the receptor TOM22 and small TOM proteins. Can associate with the SAM(core) complex as well as the MDM12-MMM1 complex, both involved in late steps of the major beta-barrel assembly pathway, that is responsible for biogenesis of all outer membrane beta-barrel proteins. May act as a switch that shuttles between both complexes and channels precursor proteins into the TOM40-specific pathway. Plays a role in mitochondrial morphology and in the inheritance of mitochondria. The sequence is that of Mitochondrial distribution and morphology protein 10 from Eremothecium gossypii (strain ATCC 10895 / CBS 109.51 / FGSC 9923 / NRRL Y-1056) (Yeast).